The sequence spans 443 residues: Carboxypeptidase M (443 aa).

A signal peptide spans 1–17 (MDFPCLWLGLLLPLVAA). Residues 21–311 (NYHRQEGMEA…ASLIEYIKQV (291 aa)) form the Peptidase M14 domain. Asn-38 is a glycosylation site (N-linked (GlcNAc...) asparagine). Positions 83 and 86 each coordinate Zn(2+). Asn-115 and Asn-164 each carry an N-linked (GlcNAc...) asparagine glycan. Cystine bridges form between Cys-138/Cys-285, Cys-242/Cys-284, and Cys-341/Cys-410. His-190 contributes to the Zn(2+) binding site. The Proton donor/acceptor role is filled by Glu-281. Asn-363 and Asn-384 each carry an N-linked (GlcNAc...) asparagine glycan. Ser-423 is lipidated: GPI-anchor amidated serine. Positions 424 to 443 (AATKPSLFLFLVSLLHIFFK) are cleaved as a propeptide — removed in mature form.

It belongs to the peptidase M14 family. It depends on Zn(2+) as a cofactor.

The protein resides in the cell membrane. It catalyses the reaction Cleavage of C-terminal arginine or lysine residues from polypeptides.. Inhibited by O-phenanthroline and MGTA and activated by cobalt. In terms of biological role, specifically removes C-terminal basic residues (Arg or Lys) from peptides and proteins. It is believed to play important roles in the control of peptide hormone and growth factor activity at the cell surface, and in the membrane-localized degradation of extracellular proteins. The chain is Carboxypeptidase M (CPM) from Homo sapiens (Human).